A 134-amino-acid chain; its full sequence is Terepressin/terephysin (134 aa).

A signal peptide spans 1–33; that stretch reads MKCSVLQMSRLSWTACVLLLPLLLLTLQGGVQG. Residues Cys-34 and Cys-39 are joined by a disulfide bond. Positions 44–50 are excised as a propeptide; sequence KRAVDSV. Cystine bridges form between Cys-56-Cys-100, Cys-59-Cys-73, Cys-67-Cys-90, Cys-74-Cys-80, Cys-107-Cys-121, Cys-115-Cys-133, and Cys-122-Cys-127.

Belongs to the vasopressin/oxytocin family. Contains 7 disulfide bonds. In terms of tissue distribution, expressed by the venom duct.

Its subcellular location is the secreted. This is Terepressin/terephysin from Terebra anilis (Auger snail).